Reading from the N-terminus, the 89-residue chain is Small ribosomal subunit protein uS15 (89 aa).

It belongs to the universal ribosomal protein uS15 family. Part of the 30S ribosomal subunit. Forms a bridge to the 50S subunit in the 70S ribosome, contacting the 23S rRNA.

Functionally, one of the primary rRNA binding proteins, it binds directly to 16S rRNA where it helps nucleate assembly of the platform of the 30S subunit by binding and bridging several RNA helices of the 16S rRNA. In terms of biological role, forms an intersubunit bridge (bridge B4) with the 23S rRNA of the 50S subunit in the ribosome. This is Small ribosomal subunit protein uS15 from Allorhizobium ampelinum (strain ATCC BAA-846 / DSM 112012 / S4) (Agrobacterium vitis (strain S4)).